Consider the following 136-residue polypeptide: Methylglyoxal synthase (136 aa).

The MGS-like domain occupies 1–136; it reads MKIALIAHDR…REVVREENEA (136 aa). Residues His8, Lys12, 34-37, and 54-55 each bind substrate; these read TGTT and SG. Asp60 (proton donor/acceptor) is an active-site residue. His87 is a substrate binding site.

The protein belongs to the methylglyoxal synthase family.

It carries out the reaction dihydroxyacetone phosphate = methylglyoxal + phosphate. Its function is as follows. Catalyzes the formation of methylglyoxal from dihydroxyacetone phosphate. The protein is Methylglyoxal synthase of Brevibacillus brevis (strain 47 / JCM 6285 / NBRC 100599).